Consider the following 587-residue polypeptide: NADH-quinone oxidoreductase subunit C/D (587 aa).

An NADH dehydrogenase I subunit C region spans residues Met-1–Gln-178. The tract at residues Asp-202–Arg-587 is NADH dehydrogenase I subunit D.

In the N-terminal section; belongs to the complex I 30 kDa subunit family. This sequence in the C-terminal section; belongs to the complex I 49 kDa subunit family. In terms of assembly, NDH-1 is composed of 13 different subunits. Subunits NuoB, CD, E, F, and G constitute the peripheral sector of the complex.

The protein resides in the cell inner membrane. The catalysed reaction is a quinone + NADH + 5 H(+)(in) = a quinol + NAD(+) + 4 H(+)(out). Its function is as follows. NDH-1 shuttles electrons from NADH, via FMN and iron-sulfur (Fe-S) centers, to quinones in the respiratory chain. The immediate electron acceptor for the enzyme in this species is believed to be ubiquinone. Couples the redox reaction to proton translocation (for every two electrons transferred, four hydrogen ions are translocated across the cytoplasmic membrane), and thus conserves the redox energy in a proton gradient. This Methylococcus capsulatus (strain ATCC 33009 / NCIMB 11132 / Bath) protein is NADH-quinone oxidoreductase subunit C/D.